The sequence spans 152 residues: Superoxide dismutase [Cu-Zn] 2 (152 aa).

3 residues coordinate Cu cation: histidine 45, histidine 47, and histidine 62. Cysteine 56 and cysteine 145 are oxidised to a cystine. The Zn(2+) site is built by histidine 62, histidine 70, histidine 79, and aspartate 82. Histidine 119 is a Cu cation binding site.

Belongs to the Cu-Zn superoxide dismutase family. As to quaternary structure, homodimer. Cu cation is required as a cofactor. The cofactor is Zn(2+).

The protein localises to the cytoplasm. The enzyme catalyses 2 superoxide + 2 H(+) = H2O2 + O2. In terms of biological role, destroys radicals which are normally produced within the cells and which are toxic to biological systems. The polypeptide is Superoxide dismutase [Cu-Zn] 2 (SODCC2) (Oryza sativa subsp. japonica (Rice)).